A 92-amino-acid polypeptide reads, in one-letter code: Small ribosomal subunit protein uS17 (92 aa).

Belongs to the universal ribosomal protein uS17 family. Part of the 30S ribosomal subunit.

Its function is as follows. One of the primary rRNA binding proteins, it binds specifically to the 5'-end of 16S ribosomal RNA. This chain is Small ribosomal subunit protein uS17, found in Corynebacterium urealyticum (strain ATCC 43042 / DSM 7109).